The following is a 393-amino-acid chain: S-adenosylmethionine synthase 2 (393 aa).

Mg(2+) is bound at residue Glu9. His15 is an ATP binding site. Residue Glu43 coordinates K(+). Glu56 and Gln99 together coordinate L-methionine. ATP contacts are provided by residues 167–169 (DGK), 235–238 (SGRF), Asp246, 252–253 (RK), Ala269, Lys273, and Lys277. Asp246 serves as a coordination point for L-methionine. Lys277 lines the L-methionine pocket.

This sequence belongs to the AdoMet synthase family. Homotetramer. It depends on Mn(2+) as a cofactor. Requires Mg(2+) as cofactor. Co(2+) serves as cofactor. The cofactor is K(+).

It is found in the cytoplasm. The enzyme catalyses L-methionine + ATP + H2O = S-adenosyl-L-methionine + phosphate + diphosphate. It participates in amino-acid biosynthesis; S-adenosyl-L-methionine biosynthesis; S-adenosyl-L-methionine from L-methionine: step 1/1. Catalyzes the formation of S-adenosylmethionine from methionine and ATP. The reaction comprises two steps that are both catalyzed by the same enzyme: formation of S-adenosylmethionine (AdoMet) and triphosphate, and subsequent hydrolysis of the triphosphate. The protein is S-adenosylmethionine synthase 2 (SAMS2) of Elaeagnus umbellata (Autumn olive).